Consider the following 508-residue polypeptide: Photosystem II CP47 reaction center protein (508 aa).

A run of 6 helical transmembrane segments spans residues 21–36 (AVHIMHTALVAGWAGS), 101–115 (ILFSGLCFLAAIWHW), 140–156 (GIHLFLSGLACFGFGAF), 203–218 (IAAGTLGILAGLFHLS), 237–252 (VLSSSIAAVFFAAFVV), and 457–472 (SFALLFFFGHIWHGAR).

Belongs to the PsbB/PsbC family. PsbB subfamily. PSII is composed of 1 copy each of membrane proteins PsbA, PsbB, PsbC, PsbD, PsbE, PsbF, PsbH, PsbI, PsbJ, PsbK, PsbL, PsbM, PsbT, PsbX, PsbY, PsbZ, Psb30/Ycf12, at least 3 peripheral proteins of the oxygen-evolving complex and a large number of cofactors. It forms dimeric complexes. The cofactor is Binds multiple chlorophylls. PSII binds additional chlorophylls, carotenoids and specific lipids..

It is found in the plastid. Its subcellular location is the chloroplast thylakoid membrane. One of the components of the core complex of photosystem II (PSII). It binds chlorophyll and helps catalyze the primary light-induced photochemical processes of PSII. PSII is a light-driven water:plastoquinone oxidoreductase, using light energy to abstract electrons from H(2)O, generating O(2) and a proton gradient subsequently used for ATP formation. This Oenothera argillicola (Appalachian evening primrose) protein is Photosystem II CP47 reaction center protein.